The chain runs to 1300 residues: Sal-like protein 3 (1300 aa).

Positions 1–11 are enriched in basic residues; sequence MSRRKQAKPQH. 4 disordered regions span residues 1–51, 84–162, 234–258, and 277–352; these read MSRR…EETS, EDAP…YGAP, QRPPPRPSLSPAAAPSAPGPAPSQL, and GSGP…GSLL. A C2H2-type 1; atypical zinc finger spans residues 51-73; it reads SVCEKCCAEFFKWADFLEHQRSC. Positions 87–100 are enriched in pro residues; that stretch reads PAPPPEDFPEPSPA. Phosphoserine is present on Ser109. Over residues 122-132 the composition is skewed to basic and acidic residues; the sequence is GEARPVEKEAE. Pro residues predominate over residues 145-157; the sequence is PRPPPAAPAPPTP. Composition is skewed to low complexity over residues 277 to 319 and 329 to 352; these read GSGP…AAPA and PQSAASSQPQSASTPPALAPGSLL. 2 consecutive C2H2-type zinc fingers follow at residues 420–442 and 448–470; these read HKCRFCAKVFGSDSALQIHLRSH and FKCNICGNRFSTKGNLKVHFQRH. The disordered stretch occupies residues 523–633; it reads PTSVGLQLPP…VDGAPTSLGS (111 aa). The segment covering 543 to 561 has biased composition (low complexity); it reads SPSATPASRSPQRPSPASS. Positions 577 to 586 are enriched in polar residues; the sequence is VSATAESPQS. C2H2-type zinc fingers lie at residues 679–701, 707–729, and 739–761; these read NQCVICHRVLSCQSALKMHYRTH, FKCKICGRAFTTKGNLKTHFGVH, and HSCPICQKKFTNAVVLQQHIRMH. Residues 864 to 955 form a disordered region; it reads SVENGSGESD…GSGGAPGRAG (92 aa). Residues 889–910 show a composition bias toward low complexity; that stretch reads RSAGSPALSESSSSQALSPAPS. Ser919 is subject to Phosphoserine. 4 consecutive C2H2-type zinc fingers follow at residues 977 to 999, 1005 to 1027, 1113 to 1135, and 1141 to 1163; these read TVCGVCGKPFACKSALEIHYRSH, FVCALCRRGCSTMGNLKQHLLTH, HNCQSCGKTFSSASALQIHERTH, and FGCTICGRAFTTKGNLKVHMGTH. Residue Ser1177 is modified to Phosphoserine. The tract at residues 1259 to 1279 is disordered; sequence GMDKARTGSSPPIVSLDKASS.

Belongs to the sal C2H2-type zinc-finger protein family. Widely expressed in adult with highest levels in heart. Expressed in fetal brain (in neurons of hippocampus, cortex, mediodorsal and ventrolateral thalamic nuclei, putamen, cerebellum and brainstem).

The protein localises to the nucleus. Probable transcription factor. This Homo sapiens (Human) protein is Sal-like protein 3 (SALL3).